We begin with the raw amino-acid sequence, 80 residues long: MKLTCVLITTVLFLTASQLITADYSRDKRQYRAVRLRDEMRNFKGARDCGEQGQGCYIYPCCPGLTCLGGGTGGGVCQPQ.

An N-terminal signal peptide occupies residues 1 to 22; the sequence is MKLTCVLITTVLFLTASQLITA. A propeptide spanning residues 23–47 is cleaved from the precursor; it reads DYSRDKRQYRAVRLRDEMRNFKGAR. Disulfide bonds link Cys49–Cys62, Cys56–Cys67, and Cys61–Cys77. Pro60 and Pro63 each carry 4-hydroxyproline.

This sequence belongs to the conotoxin O1 superfamily. Expressed by the venom duct.

The protein localises to the secreted. In terms of biological role, ion channel inhibitor that inhibits the increase in intracellular calcium upon depolarization in DRG neurons. In vivo, both intraperitoneal and intracranial injections into mice induce hyperactivity. The protein is Conotoxin Vi6.2 of Conus virgo (Virgin cone).